The primary structure comprises 550 residues: Eukaryotic translation initiation factor 3 subunit D-2 (550 aa).

The interval 97 to 126 (RGRGFRPSVHNNPRNVRNQRGRKGNAMGNI) is disordered. The interval 287–301 (KFDMLTVNETSQEPP) is RNA gate. Residues 530–550 (SDVSEEEESSEDKPFGLSMNN) are disordered.

Belongs to the eIF-3 subunit D family. In terms of assembly, component of the eukaryotic translation initiation factor 3 (eIF-3) complex. The eIF-3 complex interacts with pix.

Its subcellular location is the cytoplasm. In terms of biological role, mRNA cap-binding component of the eukaryotic translation initiation factor 3 (eIF-3) complex, which is involved in protein synthesis of a specialized repertoire of mRNAs and, together with other initiation factors, stimulates binding of mRNA and methionyl-tRNAi to the 40S ribosome. The eIF-3 complex specifically targets and initiates translation of a subset of mRNAs involved in cell proliferation. In the eIF-3 complex, eif3d specifically recognizes and binds the 7-methylguanosine cap of a subset of mRNAs. The protein is Eukaryotic translation initiation factor 3 subunit D-2 of Drosophila willistoni (Fruit fly).